The chain runs to 180 residues: Nucleoside-triphosphatase THEP1 (180 aa).

Residues 9–16 (GPAGVGKT) and 104–111 (LIVIDEIG) contribute to the ATP site.

This sequence belongs to the THEP1 NTPase family.

The enzyme catalyses a ribonucleoside 5'-triphosphate + H2O = a ribonucleoside 5'-diphosphate + phosphate + H(+). Functionally, has nucleotide phosphatase activity towards ATP, GTP, CTP, TTP and UTP. May hydrolyze nucleoside diphosphates with lower efficiency. This Thermococcus kodakarensis (strain ATCC BAA-918 / JCM 12380 / KOD1) (Pyrococcus kodakaraensis (strain KOD1)) protein is Nucleoside-triphosphatase THEP1.